Here is a 332-residue protein sequence, read N- to C-terminus: Probable L-asparaginase (332 aa).

One can recognise an Asparaginase/glutaminase domain in the interval 6-332 (PTIALLATGG…AKIQEMFEEY (327 aa)). The active-site O-isoaspartyl threonine intermediate is Thr-16. Residues Ser-62 and 95–96 (TD) each bind substrate.

The protein belongs to the asparaginase 1 family.

The protein localises to the cytoplasm. It catalyses the reaction L-asparagine + H2O = L-aspartate + NH4(+). This Helicobacter pylori (strain J99 / ATCC 700824) (Campylobacter pylori J99) protein is Probable L-asparaginase (ansA).